A 274-amino-acid polypeptide reads, in one-letter code: 3-methyl-2-oxobutanoate hydroxymethyltransferase (274 aa).

Residues D49 and D88 each contribute to the Mg(2+) site. 3-methyl-2-oxobutanoate contacts are provided by residues 49 to 50 (DS), D88, and K118. E120 contributes to the Mg(2+) binding site. Catalysis depends on E187, which acts as the Proton acceptor.

This sequence belongs to the PanB family. As to quaternary structure, homodecamer; pentamer of dimers. It depends on Mg(2+) as a cofactor.

The protein localises to the cytoplasm. The enzyme catalyses 3-methyl-2-oxobutanoate + (6R)-5,10-methylene-5,6,7,8-tetrahydrofolate + H2O = 2-dehydropantoate + (6S)-5,6,7,8-tetrahydrofolate. It functions in the pathway cofactor biosynthesis; (R)-pantothenate biosynthesis; (R)-pantoate from 3-methyl-2-oxobutanoate: step 1/2. In terms of biological role, catalyzes the reversible reaction in which hydroxymethyl group from 5,10-methylenetetrahydrofolate is transferred onto alpha-ketoisovalerate to form ketopantoate. The chain is 3-methyl-2-oxobutanoate hydroxymethyltransferase from Nitrobacter winogradskyi (strain ATCC 25391 / DSM 10237 / CIP 104748 / NCIMB 11846 / Nb-255).